The primary structure comprises 215 residues: 3,4-dihydroxy-2-butanone 4-phosphate synthase (215 aa).

Residues arginine 38–glutamate 39, aspartate 43, arginine 151–threonine 155, and glutamate 175 each bind D-ribulose 5-phosphate. Glutamate 39 lines the Mg(2+) pocket. Histidine 154 is a Mg(2+) binding site.

This sequence belongs to the DHBP synthase family. Homodimer. Mg(2+) serves as cofactor. Mn(2+) is required as a cofactor.

It catalyses the reaction D-ribulose 5-phosphate = (2S)-2-hydroxy-3-oxobutyl phosphate + formate + H(+). Its pathway is cofactor biosynthesis; riboflavin biosynthesis; 2-hydroxy-3-oxobutyl phosphate from D-ribulose 5-phosphate: step 1/1. Catalyzes the conversion of D-ribulose 5-phosphate to formate and 3,4-dihydroxy-2-butanone 4-phosphate. This is 3,4-dihydroxy-2-butanone 4-phosphate synthase from Haemophilus influenzae (strain PittEE).